A 275-amino-acid polypeptide reads, in one-letter code: DNA-directed RNA polymerase subunit Rpo3 (275 aa).

It belongs to the archaeal Rpo3/eukaryotic RPB3 RNA polymerase subunit family. Part of the RNA polymerase complex.

It localises to the cytoplasm. The enzyme catalyses RNA(n) + a ribonucleoside 5'-triphosphate = RNA(n+1) + diphosphate. DNA-dependent RNA polymerase (RNAP) catalyzes the transcription of DNA into RNA using the four ribonucleoside triphosphates as substrates. This chain is DNA-directed RNA polymerase subunit Rpo3, found in Methanopyrus kandleri (strain AV19 / DSM 6324 / JCM 9639 / NBRC 100938).